The primary structure comprises 212 residues: Translation initiation factor IF-3 (212 aa).

Positions 168–212 (MAPKAPASPKKDKADRPEGDAGDTDMAAPAPAPAAAPETESAPSA) are disordered. Residues 176–186 (PKKDKADRPEG) are compositionally biased toward basic and acidic residues. A compositionally biased stretch (low complexity) spans 194 to 212 (AAPAPAPAAAPETESAPSA).

It belongs to the IF-3 family. As to quaternary structure, monomer.

It localises to the cytoplasm. Its function is as follows. IF-3 binds to the 30S ribosomal subunit and shifts the equilibrium between 70S ribosomes and their 50S and 30S subunits in favor of the free subunits, thus enhancing the availability of 30S subunits on which protein synthesis initiation begins. The sequence is that of Translation initiation factor IF-3 from Deinococcus radiodurans (strain ATCC 13939 / DSM 20539 / JCM 16871 / CCUG 27074 / LMG 4051 / NBRC 15346 / NCIMB 9279 / VKM B-1422 / R1).